Consider the following 507-residue polypeptide: Xaa-Pro aminopeptidase 3 (507 aa).

Residues 1–31 (MPWLLSAPKLVPAVANVRGLSGCMLCSQRRY) constitute a mitochondrion transit peptide. The segment at 54 to 79 (HPHLLRPGEVTPGLSQVEYALRRHKL) is interaction with TNFRSF1B. Positions 300, 331, 342, 424, 431, 451, and 475 each coordinate substrate. The Mn(2+) site is built by D331, D342, and H424. Residues E451 and E475 each contribute to the Mn(2+) site.

Belongs to the peptidase M24B family. As to quaternary structure, homodimer. Isoform 1 interacts with TNFRSF1B/TNFR2 (activated) and TRAF2. It depends on Mn(2+) as a cofactor. As to expression, isoform 1 and isoform 2 are widely expressed, with isoform 1 being more abundant.

It is found in the mitochondrion. The protein localises to the cytoplasm. The enzyme catalyses Release of any N-terminal amino acid, including proline, that is linked to proline, even from a dipeptide or tripeptide.. In terms of biological role, catalyzes the removal of a penultimate prolyl residue from the N-termini of peptides, such as Leu-Pro-Ala. Also shows low activity towards peptides with Ala or Ser at the P1 position. Functionally, promotes TNFRSF1B-mediated phosphorylation of MAPK8/JNK1 and MAPK9/JNK2, suggesting a function as an adapter protein for TNFRSF1B; the effect is independent of XPNPEP3 peptidase activity. May inhibit apoptotic cell death induced via TNF-TNFRSF1B signaling. The sequence is that of Xaa-Pro aminopeptidase 3 (XPNPEP3) from Homo sapiens (Human).